Reading from the N-terminus, the 556-residue chain is Insulin-like growth factor 2 mRNA-binding protein 2 (556 aa).

2 consecutive RRM domains span residues 3–76 and 82–157; these read NKLY…YSVS and RKIQ…YIPD. Serine 11 is modified (phosphoserine). The tract at residues 156-188 is disordered; it reads PDEEVSSPSPPQRAQRGDHSSREQGHAPGGTSQ. Residues serine 162 and serine 164 each carry the phosphoserine modification. A compositionally biased stretch (basic and acidic residues) spans 170 to 180; sequence QRGDHSSREQG. KH domains follow at residues 193–258, 274–341, 384–449, and 466–532; these read DFPL…CRMI, EIPL…EIEI, QEIV…QGRI, and KLEA…QRKI. The residue at position 507 (threonine 507) is a Phosphothreonine.

It belongs to the RRM IMP/VICKZ family. In terms of assembly, can form homooligomers and heterooligomers with IGF2BP1 and IGF2BP3 in an RNA-dependent manner. Interacts with HNRPD. Interacts with IGF2BP1. Interacts with ELAVL1, DHX9, HNRNPU, MATR3 and PABPC1.

The protein resides in the nucleus. Its subcellular location is the cytoplasm. It is found in the P-body. The protein localises to the stress granule. In terms of biological role, RNA-binding factor that recruits target transcripts to cytoplasmic protein-RNA complexes (mRNPs). This transcript 'caging' into mRNPs allows mRNA transport and transient storage. It also modulates the rate and location at which target transcripts encounter the translational apparatus and shields them from endonuclease attacks or microRNA-mediated degradation. Preferentially binds to N6-methyladenosine (m6A)-containing mRNAs and increases their stability. Binds to the 5'-UTR of the insulin-like growth factor 2 (IGF2) mRNAs. Binding is isoform-specific. Binds to beta-actin/ACTB and MYC transcripts. Increases MYC mRNA stability by binding to the coding region instability determinant (CRD) and binding is enhanced by m6A-modification of the CRD. The sequence is that of Insulin-like growth factor 2 mRNA-binding protein 2 (IGF2BP2) from Pongo abelii (Sumatran orangutan).